The chain runs to 1296 residues: ABC transporter B family member 21 (1296 aa).

The tract at residues M1–K59 is disordered. The segment covering E9–K59 has biased composition (basic and acidic residues). Residues I77–M97 traverse the membrane as a helical segment. Residues M80–A368 enclose the ABC transmembrane type-1 1 domain. N113 is a glycosylation site (N-linked (GlcNAc...) asparagine). Helical transmembrane passes span F128–I148, I205–L225, L227–I247, G307–Y327, and G336–L356. The region spanning I403–R639 is the ABC transporter 1 domain. An N-linked (GlcNAc...) asparagine glycan is attached at N409. G438–S445 is a binding site for ATP. N-linked (GlcNAc...) asparagine glycans are attached at residues N505, N519, and N590. Residues L640–K662 are compositionally biased toward basic and acidic residues. A disordered region spans residues L640–S672. S657 and S660 each carry phosphoserine. Positions L730–K1017 constitute an ABC transmembrane type-1 2 domain. Helical transmembrane passes span I731 to I751 and I774 to F794. A glycan (N-linked (GlcNAc...) asparagine) is linked at N826. The next 3 helical transmembrane spans lie at V865–I885, G952–A972, and T986–S1006. The 238-residue stretch at I1052–Q1289 folds into the ABC transporter 2 domain. Residue G1087–S1094 participates in ATP binding. Residues N1141 and N1240 are each glycosylated (N-linked (GlcNAc...) asparagine).

This sequence belongs to the ABC transporter superfamily. ABCB family. Multidrug resistance exporter (TC 3.A.1.201) subfamily.

It localises to the membrane. This is ABC transporter B family member 21 (ABCB21) from Arabidopsis thaliana (Mouse-ear cress).